A 93-amino-acid polypeptide reads, in one-letter code: Small ribosomal subunit protein uS19 (93 aa).

This sequence belongs to the universal ribosomal protein uS19 family.

Protein S19 forms a complex with S13 that binds strongly to the 16S ribosomal RNA. The chain is Small ribosomal subunit protein uS19 from Alkaliphilus metalliredigens (strain QYMF).